Reading from the N-terminus, the 563-residue chain is Merozoite receptor PK66 (563 aa).

Positions 1–13 are cleaved as a signal peptide; the sequence is MNKIYYILFLSAQ. At 14 to 487 the chain is on the extracellular side; sequence CLVHMGKCER…DGKHKKKMLL (474 aa). Residues Asn36, Asn107, Asn176, Asn189, Asn238, and Asn441 are each glycosylated (N-linked (GlcNAc...) asparagine). A helical transmembrane segment spans residues 488–508; sequence IIIGVTGAVCVVAVASLFYFR. Residues 509-563 are Cytoplasmic-facing; the sequence is KKAQDDKYDKMDQAEAYGKTANTRKDEMLDPEASFWGEDKRASHTTPVLMEKPYY.

It belongs to the apicomplexan parasites AMA1 family.

The protein localises to the membrane. Its function is as follows. Merozoite receptor PK66 is a surface antigen involved in parasite invasion of erythrocytes. In Plasmodium knowlesi (strain nuri), this protein is Merozoite receptor PK66 (PK66).